Here is a 529-residue protein sequence, read N- to C-terminus: MTLSPYLQEVAKRRTFAIISHPDAGKTTITEKVLLFGQAIQTAGTVKGRGSSQHAKSDWMEMEKQRGISITTSVMQFPYHDCLVNLLDTPGHEDFSEDTYRTLTAVDCCLMVIDAAKGVEDRTRKLMEVTRLRDTPILTFMNKLDRDIRDPMELLDEVENELKIGCAPITWPIGCGKLFKGVYHLYKDETYLYQTGKGHTIQEVRIVKGLNNPDLDAAVGEDLAQQLRDELELVQGASNEFDKDLFLAGEITPVFFGTALGNFGVDHMLDGLVEWAPAPMPRNTDTREVTATEEKFTGFVFKIQANMDPKHRDRVAFMRVVSGKYEKGMKLRQVRIGKDVVISDALTFMAGDRSHVEEAYPGDIIGLHNHGTIQIGDTFTQGEMMKFTGIPNFAPELFRRIRLKDPLKQKQLLKGLVQLSEEGAVQVFRPIANNDLIVGAVGVLQFDVVVARLKSEYNVEAIYESVNVATARWVESTDVKKFEEFKRKNEVQLALDGGDNLTYIAPTMVNLNLTQERYPDVVFRKTREH.

In terms of domain architecture, tr-type G spans 11–280 (AKRRTFAIIS…GLVEWAPAPM (270 aa)). GTP contacts are provided by residues 20-27 (SHPDAGKT), 88-92 (DTPGH), and 142-145 (NKLD).

It belongs to the TRAFAC class translation factor GTPase superfamily. Classic translation factor GTPase family. PrfC subfamily.

Its subcellular location is the cytoplasm. Increases the formation of ribosomal termination complexes and stimulates activities of RF-1 and RF-2. It binds guanine nucleotides and has strong preference for UGA stop codons. It may interact directly with the ribosome. The stimulation of RF-1 and RF-2 is significantly reduced by GTP and GDP, but not by GMP. The sequence is that of Peptide chain release factor 3 from Klebsiella pneumoniae subsp. pneumoniae (strain ATCC 700721 / MGH 78578).